The sequence spans 454 residues: Apyrase (454 aa).

Over 1–7 (MLNQNSH) the chain is Cytoplasmic. A helical; Signal-anchor for type II membrane protein membrane pass occupies residues 8–28 (FIFIILAIFLVLPLSLLSKNV). The Extracellular segment spans residues 29–454 (NAQIPLRRHL…TTNKIRVASS (426 aa)). ATP is bound at residue 48–58 (VIFDAGSTGSR). An N-linked (GlcNAc...) asparagine glycan is attached at Asn151. The active-site Proton acceptor is the Glu170. 194–204 (ATIDLGGGSVQ) contacts ATP. The N-linked (GlcNAc...) asparagine glycan is linked to Asn262.

The protein belongs to the GDA1/CD39 NTPase family. It depends on Ca(2+) as a cofactor. In terms of processing, the N-terminus is blocked.

It localises to the membrane. It carries out the reaction a ribonucleoside 5'-triphosphate + 2 H2O = a ribonucleoside 5'-phosphate + 2 phosphate + 2 H(+). Catalyzes the hydrolysis of phosphoanhydride bonds of nucleoside tri- and di-phosphates. The sequence is that of Apyrase (RROP1) from Solanum tuberosum (Potato).